The following is a 464-amino-acid chain: Putative protein TIC 214 C-terminal part (464 aa).

This sequence belongs to the TIC214 family. Part of the Tic complex.

It is found in the plastid. Its subcellular location is the chloroplast. Its function is as follows. Involved in protein precursor import into chloroplasts. May be part of an intermediate translocation complex acting as a protein-conducting channel at the inner envelope. The chain is Putative protein TIC 214 C-terminal part from Marchantia polymorpha (Common liverwort).